The chain runs to 162 residues: Cyclic pyranopterin monophosphate synthase (162 aa).

Residues L75–H77 and M113–E114 contribute to the substrate site. The active site involves D128.

Belongs to the MoaC family. In terms of assembly, homohexamer; trimer of dimers.

It carries out the reaction (8S)-3',8-cyclo-7,8-dihydroguanosine 5'-triphosphate = cyclic pyranopterin phosphate + diphosphate. It functions in the pathway cofactor biosynthesis; molybdopterin biosynthesis. In terms of biological role, catalyzes the conversion of (8S)-3',8-cyclo-7,8-dihydroguanosine 5'-triphosphate to cyclic pyranopterin monophosphate (cPMP). The polypeptide is Cyclic pyranopterin monophosphate synthase (Klebsiella pneumoniae subsp. pneumoniae (strain ATCC 700721 / MGH 78578)).